Consider the following 1108-residue polypeptide: Retinal guanylyl cyclase 1 (1108 aa).

The signal sequence occupies residues 1 to 54 (MSAWLLPAGGLPGAGFCVPARQSPSSFSRVLRWPRPGLPGLLLLLLLPSPSALS). Residues 55–465 (AVFKVGVLGP…PDVICNGGVE (411 aa)) are Extracellular-facing. Residues Cys108 and Cys136 are joined by a disulfide bond. A glycan (N-linked (GlcNAc...) asparagine) is linked at Asn300. Residues 466 to 490 (PGLVFVGFLLVIGMGLTGAFLAHYL) form a helical membrane-spanning segment. Residues 491–811 (RHRLLHMQMA…DLTFDLFKSI (321 aa)) form the Protein kinase domain. The Cytoplasmic segment spans residues 491-1108 (RHRLLHMQMA…KARPGQFTGK (618 aa)). Residues 883 to 1013 (TLYFSDIVGF…DTVNTASRME (131 aa)) form the Guanylate cyclase domain. The interval 1069–1108 (IPKPPDLQPGASNHGISLQEIPPERRKKLEKARPGQFTGK) is disordered.

This sequence belongs to the adenylyl cyclase class-4/guanylyl cyclase family. In terms of assembly, homodimer; requires homodimerization for guanylyl cyclase activity. Interacts (via C-terminus) with RD3 (via C-terminus); promotes the exit of GUCY2E from the endoplasmic reticulum and its trafficking to the photoreceptor outer segments. Interaction with RD3 negatively regulates GUCY2E guanylate cyclase activity. There are 9 conserved cysteine residues in sensory guanylate cyclases, 6 in the extracellular domain, which may be involved in intra- or interchain disulfide bonds.

It is found in the photoreceptor outer segment membrane. It localises to the endoplasmic reticulum membrane. It catalyses the reaction GTP = 3',5'-cyclic GMP + diphosphate. Activated by GUCA1A when free calcium ions concentration is low, and inhibited by GUCA1A when free calcium ions concentration is high. Negatively regulated by RD3; RD3 inhibits the basal and GUCA1A-stimulated guanylate cyclase activity. In terms of biological role, catalyzes the synthesis of cyclic GMP (cGMP) in rods and cones of photoreceptors. Plays an essential role in phototransduction, by mediating cGMP replenishment. May also participate in the trafficking of membrane-asociated proteins to the photoreceptor outer segment membrane. In Mus musculus (Mouse), this protein is Retinal guanylyl cyclase 1 (Gucy2e).